A 323-amino-acid polypeptide reads, in one-letter code: Probable inactive poly [ADP-ribose] polymerase SRO2 (323 aa).

The region spanning 31-257 (SSVSHAGSSF…FASRPSSPWV (227 aa)) is the PARP catalytic domain. The RST domain maps to 250-321 (SRPSSPWVSF…IKNHKNRNKV (72 aa)).

Interacts with STO.

Its subcellular location is the nucleus. Its function is as follows. Probable inactive ADP-ribosyltransferase that may be involved in stress and developmental responses. The chain is Probable inactive poly [ADP-ribose] polymerase SRO2 (SRO2) from Arabidopsis thaliana (Mouse-ear cress).